The primary structure comprises 197 residues: LexA repressor (197 aa).

Residues 28–47 (VREIARRFRITPRGALLHLI) constitute a DNA-binding region (H-T-H motif). Catalysis depends on for autocatalytic cleavage activity residues S119 and K156.

This sequence belongs to the peptidase S24 family. In terms of assembly, homodimer.

It carries out the reaction Hydrolysis of Ala-|-Gly bond in repressor LexA.. Functionally, represses a number of genes involved in the response to DNA damage (SOS response), including recA and lexA. In the presence of single-stranded DNA, RecA interacts with LexA causing an autocatalytic cleavage which disrupts the DNA-binding part of LexA, leading to derepression of the SOS regulon and eventually DNA repair. This chain is LexA repressor, found in Thermotoga petrophila (strain ATCC BAA-488 / DSM 13995 / JCM 10881 / RKU-1).